Here is a 199-residue protein sequence, read N- to C-terminus: Probable thymidylate kinase (199 aa).

G7–T14 is a binding site for ATP.

The protein belongs to the thymidylate kinase family.

The enzyme catalyses dTMP + ATP = dTDP + ADP. This is Probable thymidylate kinase from Halobacterium salinarum (strain ATCC 29341 / DSM 671 / R1).